Here is a 325-residue protein sequence, read N- to C-terminus: dITP/XTP pyrophosphatase (325 aa).

Positions 1-128 (MKEKIYEYKD…KKVSELGDTI (128 aa)) are unknown. The NTP pyrophosphatase stretch occupies residues 129-324 (LIATRNEGKT…MEVFPAWQNA (196 aa)). Residue 132–137 (TRNEGK) participates in substrate binding. Mg(2+) contacts are provided by Glu165 and Asp194. Asp194 serves as the catalytic Proton acceptor. Residues Ser195, 278 to 281 (FGYD), Lys301, and 306 to 307 (HR) each bind substrate.

This sequence belongs to the HAM1 NTPase family. Homodimer. Requires Mg(2+) as cofactor.

The enzyme catalyses XTP + H2O = XMP + diphosphate + H(+). It carries out the reaction dITP + H2O = dIMP + diphosphate + H(+). The catalysed reaction is ITP + H2O = IMP + diphosphate + H(+). Functionally, pyrophosphatase that catalyzes the hydrolysis of nucleoside triphosphates to their monophosphate derivatives, with a high preference for the non-canonical purine nucleotides XTP (xanthosine triphosphate), dITP (deoxyinosine triphosphate) and ITP. Seems to function as a house-cleaning enzyme that removes non-canonical purine nucleotides from the nucleotide pool, thus preventing their incorporation into DNA/RNA and avoiding chromosomal lesions. This is dITP/XTP pyrophosphatase from Streptococcus mutans serotype c (strain ATCC 700610 / UA159).